The sequence spans 376 residues: Alcohol dehydrogenase class-3 (376 aa).

Residues Cys-47, His-69, Cys-99, Cys-102, Cys-105, Cys-113, and Cys-176 each contribute to the Zn(2+) site.

This sequence belongs to the zinc-containing alcohol dehydrogenase family. Class-III subfamily. In terms of assembly, homodimer. Zn(2+) is required as a cofactor. Expressed in the skeletal muscle, heart, gill filaments and liver, with highest levels in the kidney.

The protein resides in the cytoplasm. It carries out the reaction a primary alcohol + NAD(+) = an aldehyde + NADH + H(+). It catalyses the reaction a secondary alcohol + NAD(+) = a ketone + NADH + H(+). The enzyme catalyses S-(hydroxymethyl)glutathione + NADP(+) = S-formylglutathione + NADPH + H(+). The catalysed reaction is S-(hydroxymethyl)glutathione + NAD(+) = S-formylglutathione + NADH + H(+). It carries out the reaction S-nitrosoglutathione + NADH + H(+) = S-(hydroxysulfenamide)glutathione + NAD(+). In terms of biological role, class-III ADH is remarkably ineffective in oxidizing ethanol, but it readily catalyzes the oxidation of long-chain primary alcohols and the oxidation of S-(hydroxymethyl) glutathione. Also acts as a S-nitroso-glutathione reductase by catalyzing the NADH-dependent reduction of S-nitrosoglutathione, thereby regulating protein S-nitrosylation. This chain is Alcohol dehydrogenase class-3, found in Sparus aurata (Gilthead sea bream).